Reading from the N-terminus, the 141-residue chain is HTH-type transcriptional repressor NsrR (141 aa).

The 128-residue stretch at 2–129 (QLTSFTDYGL…DNYTLADLVE (128 aa)) folds into the HTH rrf2-type domain. A DNA-binding region (H-T-H motif) is located at residues 28–51 (ISQVTEVYGVSRNHMVKIINQLSR). Residues Cys-91, Cys-96, and Cys-102 each contribute to the [2Fe-2S] cluster site.

Requires [2Fe-2S] cluster as cofactor.

Its function is as follows. Nitric oxide-sensitive repressor of genes involved in protecting the cell against nitrosative stress. May require iron for activity. The sequence is that of HTH-type transcriptional repressor NsrR from Enterobacter sp. (strain 638).